A 179-amino-acid polypeptide reads, in one-letter code: RNA pyrophosphohydrolase (179 aa).

Positions 6 to 149 (GYRANVGIVI…KKPIYEDMLK (144 aa)) constitute a Nudix hydrolase domain. Positions 38-59 (GGIDFGESELDALFRELNEEIG) match the Nudix box motif.

It belongs to the Nudix hydrolase family. RppH subfamily. A divalent metal cation is required as a cofactor.

Functionally, accelerates the degradation of transcripts by removing pyrophosphate from the 5'-end of triphosphorylated RNA, leading to a more labile monophosphorylated state that can stimulate subsequent ribonuclease cleavage. This Ruthia magnifica subsp. Calyptogena magnifica protein is RNA pyrophosphohydrolase.